Here is a 115-residue protein sequence, read N- to C-terminus: U31-theraphotoxin-Cg1a (115 aa).

Positions 1–18 are cleaved as a signal peptide; that stretch reads MKLCVIIIASLMVASVSG. Residues 19 to 51 constitute a propeptide that is removed on maturation; it reads RLRKIKGTELDKKMLLEKLGHGMDIRFEETPRA. 4 disulfide bridges follow: Cys52–Cys67, Cys60–Cys73, Cys64–Cys113, and Cys66–Cys86.

The protein belongs to the neurotoxin 03 (Tx2) family. 02 subfamily. In terms of tissue distribution, expressed by the venom gland.

It is found in the secreted. Functionally, probable ion channel inhibitor. The polypeptide is U31-theraphotoxin-Cg1a (Chilobrachys guangxiensis (Chinese earth tiger tarantula)).